The sequence spans 158 residues: MLNNKLTIHKTKKLYGLVSGNIEDTSIRTKEFIASEFYGYKRKFQIGIQSSYKDNESSNKQLLSTVKSLSLKQSDNAIKRNKIGGSKRSEVHSNRSKNYSSKKFRSQKCRRSRQKKRQNKKPNNSRFISSNKTKRKYYKLDFNKFDINGNPEHYLVLQ.

A disordered region spans residues 77-132 (AIKRNKIGGSKRSEVHSNRSKNYSSKKFRSQKCRRSRQKKRQNKKPNNSRFISSNK). A compositionally biased stretch (basic residues) spans 100–120 (SSKKFRSQKCRRSRQKKRQNK).

This is an uncharacterized protein from Acanthamoeba polyphaga mimivirus (APMV).